The chain runs to 87 residues: Small ribosomal subunit protein uS17 (87 aa).

The protein belongs to the universal ribosomal protein uS17 family. Part of the 30S ribosomal subunit.

Its function is as follows. One of the primary rRNA binding proteins, it binds specifically to the 5'-end of 16S ribosomal RNA. The polypeptide is Small ribosomal subunit protein uS17 (Bacillus cereus (strain ATCC 14579 / DSM 31 / CCUG 7414 / JCM 2152 / NBRC 15305 / NCIMB 9373 / NCTC 2599 / NRRL B-3711)).